The chain runs to 432 residues: Small ribosomal subunit protein uS5m (432 aa).

The interval Ala110–Arg130 is disordered. The span at Arg113–Asp127 shows a compositional bias: basic residues. The region spanning Phe220–Ile284 is the S5 DRBM domain.

The protein belongs to the universal ribosomal protein uS5 family. Component of the mitochondrial ribosome small subunit (28S) which comprises a 12S rRNA and about 30 distinct proteins.

It localises to the mitochondrion. This is Small ribosomal subunit protein uS5m (Mrps5) from Mus musculus (Mouse).